The primary structure comprises 100 residues: Urease subunit gamma (100 aa).

The protein belongs to the urease gamma subunit family. As to quaternary structure, heterotrimer of UreA (gamma), UreB (beta) and UreC (alpha) subunits. Three heterotrimers associate to form the active enzyme.

Its subcellular location is the cytoplasm. The catalysed reaction is urea + 2 H2O + H(+) = hydrogencarbonate + 2 NH4(+). The protein operates within nitrogen metabolism; urea degradation; CO(2) and NH(3) from urea (urease route): step 1/1. In Pseudomonas syringae pv. syringae (strain B728a), this protein is Urease subunit gamma.